Reading from the N-terminus, the 243-residue chain is Ras-related protein Rab-12 (243 aa).

The residue at position 1 (methionine 1) is an N-acetylmethionine. Residues 1-36 form a disordered region; the sequence is MDPSAALHRRPAGGGLGAVSPALSGGQARRRKQPPR. 2 positions are modified to phosphoserine: serine 20 and serine 24. 7 residues coordinate GTP: glycine 51, valine 52, glycine 53, lysine 54, threonine 55, serine 72, and threonine 73. Mg(2+) is bound at residue threonine 55. 2 consecutive short sequence motifs (switch) follow at residues 64 to 78 and 96 to 113; these read DTFC…GVDF and DTAG…YYRS. 2 residues coordinate Mg(2+): threonine 73 and aspartate 96. GTP is bound at residue glycine 99. Residue serine 105 is modified to Phosphoserine. GTP is bound by residues asparagine 154, lysine 155, aspartate 157, serine 185, alanine 186, and lysine 187. S-geranylgeranyl cysteine attachment occurs at residues cysteine 242 and cysteine 243.

This sequence belongs to the small GTPase superfamily. Rab family. As to quaternary structure, interacts with RABIF and OPTN. Interacts with LRRK2; interaction facilitates phosphorylation of Ser-105. Interacts with GDI1, GDI2 and CHM; these interactions are disrupted by phosphorylation on Ser-105. Interacts with RILPL1 and RILPL2; these interactions are dependent on phosphorylation of Ser-105. It depends on Mg(2+) as a cofactor. In terms of processing, phosphorylation of Ser-105 in the switch II region by LRRK2 prevents the association of RAB regulatory proteins, including CHM and RAB GDP dissociation inhibitors GDI1 and GDI2. Highest levels in skeletal and cardiac muscle. Also found in comparable amounts in brain, spinal cord and lung. Also detected in testis where it is expressed by Sertoli cells of the seminiferous tubules (at protein level).

The protein localises to the recycling endosome membrane. The protein resides in the lysosome membrane. Its subcellular location is the golgi apparatus membrane. It is found in the cytoplasmic vesicle. It localises to the autophagosome. The catalysed reaction is GTP + H2O = GDP + phosphate + H(+). Its activity is regulated as follows. Regulated by guanine nucleotide exchange factors (GEFs) including DENND3 which promote the exchange of bound GDP for free GTP. Regulated by GTPase activating proteins (GAPs) which increase the GTP hydrolysis activity. Inhibited by GDP dissociation inhibitors (GDIs). In terms of biological role, the small GTPases Rab are key regulators of intracellular membrane trafficking, from the formation of transport vesicles to their fusion with membranes. Rabs cycle between an inactive GDP-bound form and an active GTP-bound form that is able to recruit to membranes different sets of downstream effectors directly responsible for vesicle formation, movement, tethering and fusion. RAB12 may play a role in protein transport from recycling endosomes to lysosomes regulating, for instance, the degradation of the transferrin receptor. Involved in autophagy. The sequence is that of Ras-related protein Rab-12 from Rattus norvegicus (Rat).